A 499-amino-acid chain; its full sequence is Acetylcholine receptor subunit alpha-type acr-16 (499 aa).

The N-terminal stretch at 1–19 (MSSVCALLLSCALFLVAHG) is a signal peptide. Over 20–232 (SLQERRLYED…LHMRRRTLYY (213 aa)) the chain is Extracellular. N-linked (GlcNAc...) asparagine glycosylation is found at asparagine 43 and asparagine 93. Intrachain disulfides connect cysteine 147–cysteine 161 and cysteine 211–cysteine 212. Transmembrane regions (helical) follow at residues 233–253 (GFNLIMPCILTTLMTLLGFTL), 261–281 (ITLQITVLLSICFFLSIVSEM), and 289–309 (VPLLGIFFTCCMIVVTASTVF). Residues 310–473 (TVYVLNLHYR…WKFAAMVVDR (164 aa)) are Cytoplasmic-facing. Residues 474-494 (LCLYVFTIFIIASTIGIFWSA) form a helical membrane-spanning segment. Residues 495-499 (PYLVA) lie on the Extracellular side of the membrane.

It belongs to the ligand-gated ion channel (TC 1.A.9) family. Acetylcholine receptor (TC 1.A.9.1) subfamily.

It is found in the postsynaptic cell membrane. It localises to the cell membrane. Functionally, after binding acetylcholine, the AChR responds by an extensive change in conformation that affects all subunits and leads to opening of an ion-conducting channel across the plasma membrane. A subunit of the levamisole-insensitive nicotinic receptor. In Caenorhabditis briggsae, this protein is Acetylcholine receptor subunit alpha-type acr-16.